The primary structure comprises 221 residues: 2-amino-5-formylamino-6-ribosylaminopyrimidin-4(3H)-one 5'-monophosphate deformylase (221 aa).

4 residues coordinate Fe cation: Glu-29, His-31, Asp-40, and His-108.

This sequence belongs to the creatininase superfamily. FAPy deformylase family. In terms of assembly, homodimer. It depends on Fe(2+) as a cofactor. The cofactor is Zn(2+).

It catalyses the reaction 2-amino-5-formylamino-6-(5-phospho-D-ribosylamino)pyrimidin-4(3H)-one + H2O = 2,5-diamino-6-(1-D-ribosylamino)pyrimidin-4(3H)-one 5'-phosphate + formate + H(+). The protein operates within cofactor biosynthesis; coenzyme F420 biosynthesis. It functions in the pathway cofactor biosynthesis; riboflavin biosynthesis. Catalyzes the hydrolysis of the formamide of 2-amino-5-formylamino-6-ribosylamino-4(3H)-pyrimidinone 5'-monophosphate (FAPy) to form 2,5-diamino-6-ribosylamino-4(3H)-pyrimidinone 5'-phosphate (APy). This is 2-amino-5-formylamino-6-ribosylaminopyrimidin-4(3H)-one 5'-monophosphate deformylase from Methanococcus maripaludis (strain DSM 14266 / JCM 13030 / NBRC 101832 / S2 / LL).